The sequence spans 389 residues: Phosphoglycerate kinase (389 aa).

Substrate-binding positions include 19–21 (DYN), arginine 34, 57–60 (HLGR), arginine 117, and arginine 150. Residues lysine 200, glycine 288, glutamate 319, and 347 to 350 (GGDS) contribute to the ATP site.

Belongs to the phosphoglycerate kinase family. In terms of assembly, monomer.

It is found in the cytoplasm. The enzyme catalyses (2R)-3-phosphoglycerate + ATP = (2R)-3-phospho-glyceroyl phosphate + ADP. It functions in the pathway carbohydrate degradation; glycolysis; pyruvate from D-glyceraldehyde 3-phosphate: step 2/5. This Deinococcus geothermalis (strain DSM 11300 / CIP 105573 / AG-3a) protein is Phosphoglycerate kinase.